A 262-amino-acid chain; its full sequence is MLIHPQFDPAAIRIGSFAIHWYGLMYLMAFVQFLLLGRLRIRAPRYQALGWTYKYLEDLLFAGVLGVVLGGRLGYTLFYMPGFYLANPLGIFKIWEGGMSFHGGLLGVLAALYWFAKKRKTTFFVVSDLVAPLVPFGLAFGRLGNFINGELWGRPTDLPWAMAFPLVDSVPRHPSQIYQLLGEGVLLGIALWFYAGKSRRVGQVSGFFLLGYGICRFLAEYAREPDAFLGLLGLGLSMGQWLCVPMIFFGIYLMTTFKSKSK.

4 helical membrane-spanning segments follow: residues 17–37, 59–79, 94–114, and 121–141; these read FAIH…LLLG, LLFA…TLFY, IWEG…ALYW, and TTFF…LAFG. Position 142 (Arg142) interacts with a 1,2-diacyl-sn-glycero-3-phospho-(1'-sn-glycerol). A run of 3 helical transmembrane segments spans residues 176–196, 201–221, and 231–251; these read QIYQ…FYAG, VGQV…LAEY, and LLGL…FFGI.

Belongs to the Lgt family.

It is found in the cell inner membrane. The enzyme catalyses L-cysteinyl-[prolipoprotein] + a 1,2-diacyl-sn-glycero-3-phospho-(1'-sn-glycerol) = an S-1,2-diacyl-sn-glyceryl-L-cysteinyl-[prolipoprotein] + sn-glycerol 1-phosphate + H(+). Its pathway is protein modification; lipoprotein biosynthesis (diacylglyceryl transfer). In terms of biological role, catalyzes the transfer of the diacylglyceryl group from phosphatidylglycerol to the sulfhydryl group of the N-terminal cysteine of a prolipoprotein, the first step in the formation of mature lipoproteins. The chain is Phosphatidylglycerol--prolipoprotein diacylglyceryl transferase from Polynucleobacter necessarius subsp. necessarius (strain STIR1).